The following is a 411-amino-acid chain: Translation initiation factor 2 subunit gamma (411 aa).

Residues 9-203 (QAEVNIGMVG…AIEDFIPTPK (195 aa)) enclose the tr-type G domain. Residues 18-25 (GHVDHGKT) are G1. Asp-21, Thr-25, Gly-46, and Thr-48 together coordinate Mg(2+). GTP is bound at residue 21 to 26 (DHGKTT). Residues 46-50 (GITIK) form a G2 region. Residues Cys-61, Cys-64, Cys-73, and Cys-76 each contribute to the Zn(2+) site. Residues 90–93 (DAPG) are G3. GTP-binding positions include 146-149 (NKIE) and 181-183 (SAL). The interval 146-149 (NKIE) is G4. Residues 181-183 (SAL) form a G5 region.

It belongs to the TRAFAC class translation factor GTPase superfamily. Classic translation factor GTPase family. EIF2G subfamily. Heterotrimer composed of an alpha, a beta and a gamma chain. Mg(2+) serves as cofactor.

It catalyses the reaction GTP + H2O = GDP + phosphate + H(+). Functionally, eIF-2 functions in the early steps of protein synthesis by forming a ternary complex with GTP and initiator tRNA. This chain is Translation initiation factor 2 subunit gamma, found in Pyrococcus abyssi (strain GE5 / Orsay).